The chain runs to 413 residues: Coiled-coil domain-containing protein 83 (413 aa).

The interval 1-21 (MENSGKANKKDTHDGPPKEIK) is disordered. Residues 8 to 21 (NKKDTHDGPPKEIK) are compositionally biased toward basic and acidic residues. Coiled coils occupy residues 37–184 (EDAV…RKKI) and 216–256 (WEND…LSNC).

The protein is Coiled-coil domain-containing protein 83 (CCDC83) of Homo sapiens (Human).